Reading from the N-terminus, the 233-residue chain is tRNA (guanine-N(1)-)-methyltransferase (233 aa).

S-adenosyl-L-methionine-binding positions include Gly-113 and Val-133 to Leu-138.

This sequence belongs to the RNA methyltransferase TrmD family. In terms of assembly, homodimer.

It is found in the cytoplasm. It carries out the reaction guanosine(37) in tRNA + S-adenosyl-L-methionine = N(1)-methylguanosine(37) in tRNA + S-adenosyl-L-homocysteine + H(+). Functionally, specifically methylates guanosine-37 in various tRNAs. The chain is tRNA (guanine-N(1)-)-methyltransferase from Rhizobium etli (strain ATCC 51251 / DSM 11541 / JCM 21823 / NBRC 15573 / CFN 42).